A 130-amino-acid polypeptide reads, in one-letter code: Histone H2A type 1-E (130 aa).

Positions methionine 1–alanine 22 are disordered. Serine 2 carries the N-acetylserine modification. At serine 2 the chain carries Phosphoserine; by RPS6KA5. Position 4 is a citrulline; alternate (arginine 4). The residue at position 4 (arginine 4) is a Symmetric dimethylarginine; by PRMT5; alternate. An N6-(2-hydroxyisobutyryl)lysine; alternate mark is found at lysine 6 and lysine 10. Residue lysine 6 is modified to N6-acetyllysine; alternate. The span at glutamine 7–serine 19 shows a compositional bias: basic residues. The residue at position 10 (lysine 10) is an N6-lactoyllysine; alternate. Residue lysine 10 is modified to N6-succinyllysine; alternate. Residues lysine 14 and lysine 16 each participate in a glycyl lysine isopeptide (Lys-Gly) (interchain with G-Cter in ubiquitin) cross-link. Lysine 37 is modified (N6-(2-hydroxyisobutyryl)lysine; alternate). Lysine 37 is subject to N6-(beta-hydroxybutyryl)lysine; alternate. Lysine 37 is subject to N6-crotonyllysine; alternate. Lysine 75 and lysine 76 each carry N6-(2-hydroxyisobutyryl)lysine. At lysine 96 the chain carries N6-(2-hydroxyisobutyryl)lysine; alternate. Lysine 96 carries the post-translational modification N6-succinyllysine; alternate. Residue lysine 96 is modified to N6-glutaryllysine; alternate. Glutamine 105 is subject to N5-methylglutamine. Position 119 is an N6-(2-hydroxyisobutyryl)lysine; alternate (lysine 119). 2 positions are modified to N6-crotonyllysine; alternate: lysine 119 and lysine 120. An N6-glutaryllysine; alternate mark is found at lysine 119 and lysine 120. A Glycyl lysine isopeptide (Lys-Gly) (interchain with G-Cter in ubiquitin); alternate cross-link involves residue lysine 120. Threonine 121 bears the Phosphothreonine; by DCAF1 mark. Position 126 is an N6-crotonyllysine; alternate (lysine 126). At lysine 126 the chain carries N6-glutaryllysine; alternate.

It belongs to the histone H2A family. The nucleosome is a histone octamer containing two molecules each of H2A, H2B, H3 and H4 assembled in one H3-H4 heterotetramer and two H2A-H2B heterodimers. The octamer wraps approximately 147 bp of DNA. Deiminated on Arg-4 in granulocytes upon calcium entry. In terms of processing, monoubiquitination of Lys-120 (H2AK119Ub) by RING1, TRIM37 and RNF2/RING2 complex gives a specific tag for epigenetic transcriptional repression and participates in X chromosome inactivation of female mammals. It is involved in the initiation of both imprinted and random X inactivation. Ubiquitinated H2A is enriched in inactive X chromosome chromatin. Ubiquitination of H2A functions downstream of methylation of 'Lys-27' of histone H3 (H3K27me). H2AK119Ub by RNF2/RING2 can also be induced by ultraviolet and may be involved in DNA repair. Following DNA double-strand breaks (DSBs), it is ubiquitinated through 'Lys-63' linkage of ubiquitin moieties by the E2 ligase UBE2N and the E3 ligases RNF8 and RNF168, leading to the recruitment of repair proteins to sites of DNA damage. Ubiquitination at Lys-14 and Lys-16 (H2AK13Ub and H2AK15Ub, respectively) in response to DNA damage is initiated by RNF168 that mediates monoubiquitination at these 2 sites, and 'Lys-63'-linked ubiquitin are then conjugated to monoubiquitin; RNF8 is able to extend 'Lys-63'-linked ubiquitin chains in vitro. H2AK119Ub and ionizing radiation-induced 'Lys-63'-linked ubiquitination (H2AK13Ub and H2AK15Ub) are distinct events. Post-translationally, phosphorylation on Ser-2 (H2AS1ph) is enhanced during mitosis. Phosphorylation on Ser-2 by RPS6KA5/MSK1 directly represses transcription. Acetylation of H3 inhibits Ser-2 phosphorylation by RPS6KA5/MSK1. Phosphorylation at Thr-121 (H2AT120ph) by DCAF1 is present in the regulatory region of many tumor suppresor genes and down-regulates their transcription. Symmetric dimethylation on Arg-4 by the PRDM1/PRMT5 complex may play a crucial role in the germ-cell lineage. In terms of processing, glutamine methylation at Gln-105 (H2AQ104me) by FBL is specifically dedicated to polymerase I. It is present at 35S ribosomal DNA locus and impairs binding of the FACT complex. Post-translationally, crotonylation (Kcr) is specifically present in male germ cells and marks testis-specific genes in post-meiotic cells, including X-linked genes that escape sex chromosome inactivation in haploid cells. Crotonylation marks active promoters and enhancers and confers resistance to transcriptional repressors. It is also associated with post-meiotically activated genes on autosomes. Lactylated in macrophages by EP300/P300 by using lactoyl-CoA directly derived from endogenous or exogenous lactate, leading to stimulates gene transcription.

The protein localises to the nucleus. It is found in the chromosome. Core component of nucleosome. Nucleosomes wrap and compact DNA into chromatin, limiting DNA accessibility to the cellular machineries which require DNA as a template. Histones thereby play a central role in transcription regulation, DNA repair, DNA replication and chromosomal stability. DNA accessibility is regulated via a complex set of post-translational modifications of histones, also called histone code, and nucleosome remodeling. The sequence is that of Histone H2A type 1-E from Rattus norvegicus (Rat).